A 158-amino-acid polypeptide reads, in one-letter code: Cyclic pyranopterin monophosphate synthase (158 aa).

Substrate is bound by residues methionine 74–histidine 76 and methionine 112–glutamate 113. Residue aspartate 127 is part of the active site.

It belongs to the MoaC family. Homohexamer; trimer of dimers.

It carries out the reaction (8S)-3',8-cyclo-7,8-dihydroguanosine 5'-triphosphate = cyclic pyranopterin phosphate + diphosphate. It participates in cofactor biosynthesis; molybdopterin biosynthesis. Catalyzes the conversion of (8S)-3',8-cyclo-7,8-dihydroguanosine 5'-triphosphate to cyclic pyranopterin monophosphate (cPMP). This Helicobacter pylori (strain ATCC 700392 / 26695) (Campylobacter pylori) protein is Cyclic pyranopterin monophosphate synthase.